A 589-amino-acid chain; its full sequence is MEAKIVKVLDSSRCEDGFGKKRKRAASYAAYVTGVSCAKLQNVPPPNGQCQIPDKRRRLEGENKLSAYENRSGKALVRYYTYFKKTGIAKRVMMYENGEWNDLPEHVICAIQNELEEKSAAIEFKLCGHSFILDFLHMQRLDMETGAKTPLAWIDNAGKCFFPEIYESDERTNYCHHKCVEDPKQNAPHDIKLRLEIDVNGGETPRLNLEECSDESGDNMMDDVPLAQRSSNEHYDEATEDSCSRKLEAAVSKWDETDAIVVSGAKLTGSEVLDKDAVKKMFAVGTASLGHVPVLDVGRFSSEIAEARLALFQKQVEITKKHRGDANVRYAWLPAKREVLSAVMMQGLGVGGAFIRKSIYGVGIHLTAADCPYFSARYCDVDENGVRYMVLCRVIMGNMELLRGDKAQFFSGGEEYDNGVDDIESPKNYIVWNINMNTHIFPEFVVRFKLSNLPNAEGNLIAKRDNSGVTLEGPKDLPPQLESNQGARGSGSANSVGSSTTRPKSPWMPFPTLFAAISHKVAENDMLLINADYQQLRDKKMTRAEFVRKLRVIVGDDLLRSTITTLQNQPKSKEIPGSIRDHEEGAGGL.

The WWE domain maps to 64–153; it reads KLSAYENRSG…ETGAKTPLAW (90 aa). The PARP catalytic domain occupies 248–469; it reads EAAVSKWDET…LIAKRDNSGV (222 aa). 2 disordered regions span residues 464-504 and 569-589; these read RDNS…TRPK and QPKSKEIPGSIRDHEEGAGGL. Polar residues predominate over residues 481–503; that stretch reads LESNQGARGSGSANSVGSSTTRP. Positions 501–572 constitute an RST domain; the sequence is TRPKSPWMPF…ITTLQNQPKS (72 aa). Residues 571-589 are compositionally biased toward basic and acidic residues; the sequence is KSKEIPGSIRDHEEGAGGL.

In terms of assembly, interacts with the transcription factors NAC013/NTL1 and NAC046. Interacts with dehydration-responsive DREB2 proteins and a number of transcription factors belonging to several protein families. Interacts with turnip crinkle virus (TCV) movement protein P8. Expressed in young developing tissues, such as young leaves and flowers and root tips. In mature plants, expressed in vasculature of leaves and roots, and guard cells.

The protein localises to the nucleus matrix. Inactive ADP-ribosyltransferase that functions with SRO1 to regulate oxidative stress, hormonal and developmental responses. Required for embryogenesis, vegetative and reproductive development, and abiotic stress responses. May regulate several stress-responsive genes. Seems to play a larger developmental role than SRO1. Does not bind NAD in vitro. In Arabidopsis thaliana (Mouse-ear cress), this protein is Inactive poly [ADP-ribose] polymerase RCD1 (RCD1).